Consider the following 184-residue polypeptide: Uroplakin-2 (184 aa).

Positions Met-1–Ser-25 are cleaved as a signal peptide. Residues Asp-26 to Arg-84 constitute a propeptide that is removed on maturation. N-linked (GlcNAc...) asparagine glycosylation is found at Asn-28, Asn-57, and Asn-66. The Lumenal segment spans residues Glu-85–Gly-155. The helical transmembrane segment at Met-156–Leu-180 threads the bilayer. The Cytoplasmic segment spans residues Gly-181 to Lys-184.

This sequence belongs to the uroplakin-2 family. As to quaternary structure, interacts with uroplakin-1a (UPK1A). Expressed only in the urothelium. Localizes to urothelial superficial cells.

Its subcellular location is the cell membrane. Functionally, component of the asymmetric unit membrane (AUM); a highly specialized biomembrane elaborated by terminally differentiated urothelial cells. May play an important role in regulating the assembly of the AUM. The chain is Uroplakin-2 (UPK2) from Sus scrofa (Pig).